The sequence spans 171 residues: Co-chaperone protein HscB homolog (171 aa).

The J domain maps to 2–74 (NHFELFGLPP…ISRAEYLLSQ (73 aa)).

The protein belongs to the HscB family. Interacts with HscA and stimulates its ATPase activity.

Its function is as follows. Co-chaperone involved in the maturation of iron-sulfur cluster-containing proteins. Seems to help targeting proteins to be folded toward HscA. This Vibrio vulnificus (strain YJ016) protein is Co-chaperone protein HscB homolog.